The following is a 213-amino-acid chain: Riboflavin synthase (213 aa).

Lumazine-binding repeat units lie at residues Met-1–His-97 and Leu-98–Val-195. 2,4-dihydroxypteridine-binding positions include Gly-4–Val-6, Cys-48–Thr-50, Asp-62–Thr-67, Gly-101–Ile-103, Lys-137, Ser-146–Thr-148, and His-160–Thr-165.

In terms of assembly, homotrimer. Unlike in B.subtilis, does not interact with 6,7-dimethyl-8-ribityllumazine synthase.

The catalysed reaction is 2 6,7-dimethyl-8-(1-D-ribityl)lumazine + H(+) = 5-amino-6-(D-ribitylamino)uracil + riboflavin. It participates in cofactor biosynthesis; riboflavin biosynthesis; riboflavin from 2-hydroxy-3-oxobutyl phosphate and 5-amino-6-(D-ribitylamino)uracil: step 2/2. Catalyzes the dismutation of two molecules of 6,7-dimethyl-8-ribityllumazine, resulting in the formation of riboflavin and 5-amino-6-(D-ribitylamino)uracil. This is Riboflavin synthase (ribC) from Escherichia coli (strain K12).